The primary structure comprises 364 residues: tRNA-specific 2-thiouridylase MnmA (364 aa).

ATP-binding positions include 13-20 (GMSGGVDS) and methionine 39. The interval 99 to 101 (NPD) is interaction with target base in tRNA. The active-site Nucleophile is the cysteine 104. A disulfide bridge connects residues cysteine 104 and cysteine 200. Glycine 128 provides a ligand contact to ATP. Residues 150–152 (KDQ) form an interaction with tRNA region. Catalysis depends on cysteine 200, which acts as the Cysteine persulfide intermediate. Positions 310–311 (RY) are interaction with tRNA.

The protein belongs to the MnmA/TRMU family.

It is found in the cytoplasm. The enzyme catalyses S-sulfanyl-L-cysteinyl-[protein] + uridine(34) in tRNA + AH2 + ATP = 2-thiouridine(34) in tRNA + L-cysteinyl-[protein] + A + AMP + diphosphate + H(+). In terms of biological role, catalyzes the 2-thiolation of uridine at the wobble position (U34) of tRNA, leading to the formation of s(2)U34. The protein is tRNA-specific 2-thiouridylase MnmA of Alkaliphilus oremlandii (strain OhILAs) (Clostridium oremlandii (strain OhILAs)).